We begin with the raw amino-acid sequence, 633 residues long: Breast carcinoma-amplified sequence 1 homolog (633 aa).

2 disordered regions span residues Met-1–Asn-34 and Ser-57–Trp-422. 2 stretches are compositionally biased toward polar residues: residues Lys-24–Asn-34 and Ser-57–Lys-68. The residue at position 127 (Ser-127) is a Phosphoserine. Residues Val-278–Met-288 are compositionally biased toward polar residues. Basic and acidic residues predominate over residues Thr-300–Cys-318. The residue at position 328 (Ser-328) is a Phosphoserine. Thr-330 is subject to Phosphothreonine. Positions Asn-359–Glu-378 are enriched in polar residues. Residue Ser-360 is modified to Phosphoserine. Residues Ser-400–Ala-410 show a composition bias toward basic and acidic residues. Ser-425 and Ser-443 each carry phosphoserine. The tract at residues Glu-454–Lys-633 is disordered. The segment covering Thr-471 to Pro-481 has biased composition (basic and acidic residues). Positions Lys-510–Lys-522 are enriched in polar residues. Phosphothreonine is present on Thr-523. Ser-525 bears the Phosphoserine mark. Positions Lys-537–Ala-555 are enriched in basic and acidic residues. 2 positions are modified to phosphoserine: Ser-601 and Ser-615. The tract at residues Met-614–Lys-633 is interacts with DYNLL1 AND DYNLL2.

Homodimer. Interacts with DYNLL1 and DYNLL2. As to expression, highly expressed in the brain and, more specifically, in oligodendrocytes. Expressed in the Schwann cells (at protein level).

It is found in the cytoplasm. Functionally, required for myelination. This is Breast carcinoma-amplified sequence 1 homolog (Bcas1) from Mus musculus (Mouse).